Reading from the N-terminus, the 440-residue chain is ATP-dependent protease ATPase subunit HslU (440 aa).

ATP contacts are provided by residues Val18, 60-65 (GVGKTE), Asp253, Glu318, and Arg390.

Belongs to the ClpX chaperone family. HslU subfamily. In terms of assembly, a double ring-shaped homohexamer of HslV is capped on each side by a ring-shaped HslU homohexamer. The assembly of the HslU/HslV complex is dependent on binding of ATP.

The protein resides in the cytoplasm. ATPase subunit of a proteasome-like degradation complex; this subunit has chaperone activity. The binding of ATP and its subsequent hydrolysis by HslU are essential for unfolding of protein substrates subsequently hydrolyzed by HslV. HslU recognizes the N-terminal part of its protein substrates and unfolds these before they are guided to HslV for hydrolysis. The chain is ATP-dependent protease ATPase subunit HslU from Methylococcus capsulatus (strain ATCC 33009 / NCIMB 11132 / Bath).